Reading from the N-terminus, the 362-residue chain is Chorismate synthase (362 aa).

The NADP(+) site is built by arginine 48 and arginine 54. FMN-binding positions include 131–133, 243–244, glycine 287, 302–306, and arginine 328; these read RSS, NA, and KPTSS.

This sequence belongs to the chorismate synthase family. In terms of assembly, homotetramer. FMNH2 is required as a cofactor.

The catalysed reaction is 5-O-(1-carboxyvinyl)-3-phosphoshikimate = chorismate + phosphate. Its pathway is metabolic intermediate biosynthesis; chorismate biosynthesis; chorismate from D-erythrose 4-phosphate and phosphoenolpyruvate: step 7/7. Catalyzes the anti-1,4-elimination of the C-3 phosphate and the C-6 proR hydrogen from 5-enolpyruvylshikimate-3-phosphate (EPSP) to yield chorismate, which is the branch point compound that serves as the starting substrate for the three terminal pathways of aromatic amino acid biosynthesis. This reaction introduces a second double bond into the aromatic ring system. This is Chorismate synthase from Bradyrhizobium diazoefficiens (strain JCM 10833 / BCRC 13528 / IAM 13628 / NBRC 14792 / USDA 110).